The primary structure comprises 459 residues: Fibrous sheath-interacting protein 1 (459 aa).

The tract at residues Met-1 to Ser-54 is disordered. Positions Arg-13 to Ser-29 are enriched in low complexity. Positions Lys-162 to Leu-202 form a coiled coil. The interval Gln-252–Gly-289 is disordered. Residues Ser-276–Gly-289 show a composition bias toward basic and acidic residues.

It belongs to the FSIP1 family.

The sequence is that of Fibrous sheath-interacting protein 1 (fsip1) from Xenopus laevis (African clawed frog).